Reading from the N-terminus, the 223-residue chain is MKSAVVQLPGLNRDCDMIAALTKISGKAPVTVWQTETEIPDVDLIVIPGGFSYGDYLRCGAIAARMPVMQAIKAKAEQGVRVLGVCNGFQILVEAGLLPGALMRNASLKFVCREVKLEVVNADTAFTRAYAKGQVIRSPVAHHDGNYFADAETLKAIEGNGQVVFRYAEGTNPNGSVNDIAGVLNAKGNVLGMMPHPENLIESAHGGADGRGLFASALDVIAA.

The region spanning 3–223 (SAVVQLPGLN…FASALDVIAA (221 aa)) is the Glutamine amidotransferase type-1 domain. The Nucleophile role is filled by Cys86. Catalysis depends on residues His196 and Glu198.

Part of the FGAM synthase complex composed of 1 PurL, 1 PurQ and 2 PurS subunits.

The protein resides in the cytoplasm. It catalyses the reaction N(2)-formyl-N(1)-(5-phospho-beta-D-ribosyl)glycinamide + L-glutamine + ATP + H2O = 2-formamido-N(1)-(5-O-phospho-beta-D-ribosyl)acetamidine + L-glutamate + ADP + phosphate + H(+). The enzyme catalyses L-glutamine + H2O = L-glutamate + NH4(+). Its pathway is purine metabolism; IMP biosynthesis via de novo pathway; 5-amino-1-(5-phospho-D-ribosyl)imidazole from N(2)-formyl-N(1)-(5-phospho-D-ribosyl)glycinamide: step 1/2. Functionally, part of the phosphoribosylformylglycinamidine synthase complex involved in the purines biosynthetic pathway. Catalyzes the ATP-dependent conversion of formylglycinamide ribonucleotide (FGAR) and glutamine to yield formylglycinamidine ribonucleotide (FGAM) and glutamate. The FGAM synthase complex is composed of three subunits. PurQ produces an ammonia molecule by converting glutamine to glutamate. PurL transfers the ammonia molecule to FGAR to form FGAM in an ATP-dependent manner. PurS interacts with PurQ and PurL and is thought to assist in the transfer of the ammonia molecule from PurQ to PurL. In Rhizobium meliloti (strain 1021) (Ensifer meliloti), this protein is Phosphoribosylformylglycinamidine synthase subunit PurQ.